We begin with the raw amino-acid sequence, 229 residues long: Guanylate kinase (229 aa).

Positions 7 to 42 (RVLQKCAYREEFKGDMERSTAATSKLPLEVELSRNS) constitute an RPE1 insert domain. One can recognise a Guanylate kinase-like domain in the interval 44–222 (GLIIILSSPS…TLKKIHAIIV (179 aa)). 51–58 (SPSGTGKS) contacts ATP.

It belongs to the guanylate kinase family.

It is found in the cytoplasm. It carries out the reaction GMP + ATP = GDP + ADP. In terms of biological role, essential for recycling GMP and indirectly, cGMP. This chain is Guanylate kinase (gmk), found in Rickettsia conorii (strain ATCC VR-613 / Malish 7).